Reading from the N-terminus, the 730-residue chain is Zinc finger protein 615 (730 aa).

The region spanning 7–78 (LTLEDVAVDF…EDEIYSRICF (72 aa)) is the KRAB domain. 19 consecutive C2H2-type zinc fingers follow at residues 203-225 (HVCS…QRVH), 231-253 (HVCS…QRTH), 259-281 (YECT…QKTH), 287-309 (YTCS…QRTH), 315-337 (HGCS…QKTH), 343-365 (YICS…HRTH), 371-393 (FICN…QQTH), 399-421 (YTCS…QRTH), 427-449 (YKCN…QRTH), 455-477 (YVCT…QRTH), 483-505 (YICN…QRTH), 511-533 (YVCG…QRTH), 539-561 (YICD…RRTH), 567-589 (YVCS…QRTH), 595-617 (YICN…QQTH), 623-645 (YKCN…QRFH), 651-673 (FACT…QRIH), 679-701 (YKCS…QRKH), and 707-729 (YGCS…KRIH).

The protein belongs to the krueppel C2H2-type zinc-finger protein family.

The protein resides in the nucleus. Functionally, may be involved in transcriptional regulation. The chain is Zinc finger protein 615 (ZNF615) from Pongo abelii (Sumatran orangutan).